The following is a 374-amino-acid chain: Ferroptosis suppressor protein 1 (374 aa).

Gly2 carries N-myristoyl glycine lipidation. A helical membrane pass occupies residues Val13–Pro35. Residues Gly17 to Ala21, Arg53, and Val81 each bind 6-hydroxy-FAD. Lys167 is subject to N6-acetyllysine. Asp285 contacts 6-hydroxy-FAD.

Belongs to the FAD-dependent oxidoreductase family. It depends on 6-hydroxy-FAD as a cofactor. Post-translationally, N-myristoylation at Gly-2 mediates the recruitment to lipid droplets and plasma membrane. In terms of processing, acetylation at Lys-167 prevents AIFM2 ubiquitination and degradation, thereby inhibiting ferroptosis. KAT2B mediates acetylation at Lys-167, while HDAC3 removes it. Ubiquitinated. AIFM2 undergoes 'Lys-29'-ubiquitination and proteasomal degradation, which is inhibited by acetylation at Lys-167.

Its subcellular location is the lipid droplet. It is found in the cell membrane. It localises to the cytoplasm. The protein localises to the mitochondrion membrane. The protein resides in the nucleus. The enzyme catalyses ubiquinone-10 + NADH + H(+) = ubiquinol-10 + NAD(+). The catalysed reaction is phylloquinone + NADH + H(+) = phylloquinol + NAD(+). It carries out the reaction menaquinone-4 + NADH + H(+) = menaquinol-4 + NAD(+). It catalyses the reaction menadione + NADH + H(+) = menadiol + NAD(+). With respect to regulation, the modification by 4-hydroxy-2-nonenal (HNE) adduction in mitochondria results in loss of the oxidoreductase activity and activation of a novel function in mitochondrial oxidative stress signaling. An NAD(P)H-dependent oxidoreductase that acts as a key inhibitor of ferroptosis. At the plasma membrane, catalyzes reduction of coenzyme Q/ubiquinone-10 to ubiquinol-10, a lipophilic radical-trapping antioxidant that prevents lipid oxidative damage and consequently ferroptosis. Acts in parallel to GPX4 to suppress phospholipid peroxidation and ferroptosis. This anti-ferroptotic function is independent of cellular glutathione levels. Also acts as a potent radical-trapping antioxidant by mediating warfarin-resistant vitamin K reduction in the canonical vitamin K cycle: catalyzes NAD(P)H-dependent reduction of vitamin K (phylloquinone, menaquinone-4 and menadione) to hydroquinone forms. Hydroquinones act as potent radical-trapping antioxidants inhibitor of phospholipid peroxidation and ferroptosis. May play a role in mitochondrial stress signaling. Upon oxidative stress, associates with the lipid peroxidation end product 4-hydroxy-2-nonenal (HNE) forming a lipid adduct devoid of oxidoreductase activity, which then translocates from mitochondria into the nucleus triggering DNA damage and cell death. In Xenopus laevis (African clawed frog), this protein is Ferroptosis suppressor protein 1 (aifm2).